Here is a 158-residue protein sequence, read N- to C-terminus: Xanthine-guanine phosphoribosyltransferase (158 aa).

Residues 38–39 (RG) and 90–98 (DDLVDTGGT) contribute to the 5-phospho-alpha-D-ribose 1-diphosphate site. Asp91 contacts Mg(2+). Guanine contacts are provided by Asp94 and Ile137. Residues Asp94 and Ile137 each contribute to the xanthine site. GMP is bound by residues 94–98 (DTGGT) and 136–137 (WI).

It belongs to the purine/pyrimidine phosphoribosyltransferase family. XGPT subfamily. As to quaternary structure, homotetramer. It depends on Mg(2+) as a cofactor.

Its subcellular location is the cell inner membrane. The enzyme catalyses GMP + diphosphate = guanine + 5-phospho-alpha-D-ribose 1-diphosphate. It carries out the reaction XMP + diphosphate = xanthine + 5-phospho-alpha-D-ribose 1-diphosphate. It catalyses the reaction IMP + diphosphate = hypoxanthine + 5-phospho-alpha-D-ribose 1-diphosphate. It functions in the pathway purine metabolism; GMP biosynthesis via salvage pathway; GMP from guanine: step 1/1. Its pathway is purine metabolism; XMP biosynthesis via salvage pathway; XMP from xanthine: step 1/1. Its function is as follows. Purine salvage pathway enzyme that catalyzes the transfer of the ribosyl-5-phosphate group from 5-phospho-alpha-D-ribose 1-diphosphate (PRPP) to the N9 position of the 6-oxopurines guanine and xanthine to form the corresponding ribonucleotides GMP (guanosine 5'-monophosphate) and XMP (xanthosine 5'-monophosphate), with the release of PPi. To a lesser extent, also acts on hypoxanthine. The protein is Xanthine-guanine phosphoribosyltransferase of Buchnera aphidicola subsp. Acyrthosiphon pisum (strain APS) (Acyrthosiphon pisum symbiotic bacterium).